A 238-amino-acid chain; its full sequence is IkB-like protein (238 aa).

ANK repeat units lie at residues 47-76 (NGSSVFMWICIYGRIDFLKFLFKQESYPGE), 86-119 (DGNSALHYLAEKKNHLILEEVLGYFGKNGTRICL), 123-152 (NGITPVMKAAMRGRSLNMLSLIKFGADPTQ), and 157-186 (RGFTAWDWAVFTGNMELVKSLNHDYQKPLY). The Nuclear localization signal motif lies at 80 to 86 (PHRRDKD). A Nuclear localization signal motif is present at residues 202–213 (KKKPKIIITGCK). The short motif at 205–212 (PKIIITGC) is the PxIxITxC motif; Interaction with host PPP3CA element. Positions 227–230 (FLCV) match the FLCV motif motif.

The protein belongs to the asfivirus A238L family. In terms of assembly, interacts with host PPIA. Interacts with host PPP3CA/Calcineurin. Interacts with host RELA/p65; interaction of the 32 kDa form with host RELA results in the formation of a stable complex with NF-kappa-B. Interacts with host PPP3R1. Interacts with host EP300; this interaction inhibits the association of host EP300 with host RELA, JUN and NFATC2. The protein exists in a 28 kDa and a 32 kDa form, probably due to post-translational modifications which are neither phosphorylation, nor sumoylation.

The protein resides in the host nucleus. It localises to the host cytoplasm. Its function is as follows. IkB-like protein that inhibits the binding of NF-kappa-B to DNA, thereby downregulating pro-inflammatory cytokine production. Forms a heterodimer with the NF-kappa-B subunit RELA/p65 and prevents the activation of the NF-kappa-B transcription factor. Inhibits calcineurin function, which is required for the induction of nuclear factor of activated T cells (NFAT)-dependent immune response genes. Prevents the binding of substrates to calcineurin without affecting the phosphatase activity. Does not contain the serine residues that are phosphorylated by host IkB kinase and thus is not degraded following stimulation of the NFkB pathway. This African swine fever virus (isolate Warthog/Namibia/Wart80/1980) (ASFV) protein is IkB-like protein (A238L).